Reading from the N-terminus, the 426-residue chain is Testicular acid phosphatase (426 aa).

The signal sequence occupies residues 1–26; the sequence is MAGLGFWGHPAGPLLLLLLLVLPPRA. The Extracellular portion of the chain corresponds to 27 to 393; that stretch reads LPEGPLVFVA…AAIPPAPVVP (367 aa). His-41 functions as the Nucleophile in the catalytic mechanism. 3 cysteine pairs are disulfide-bonded: Cys-159–Cys-378, Cys-214–Cys-312, and Cys-353–Cys-357. N-linked (GlcNAc...) asparagine glycosylation is found at Asn-191 and Asn-269. Asp-289 acts as the Proton donor in catalysis. 2 N-linked (GlcNAc...) asparagine glycosylation sites follow: Asn-330 and Asn-339. A helical transmembrane segment spans residues 394–414; the sequence is LLAGAVAVLVALSLGLGLLAW. The Cytoplasmic portion of the chain corresponds to 415 to 426; the sequence is RPGCLRALGGPV.

The protein belongs to the histidine acid phosphatase family. As to quaternary structure, homodimer. Glycosylated. In terms of tissue distribution, expressed mainly in the testis. Also expressed in the brain where they are enriched at the postsynaptic sites. Expressed at lower levels in the trachea, prostate, bone marrow, spinal cord, colon, fetal brain, heart, thymus, fetal liver, spleen, leukocytes, ovary, small intestine, pancreas and skeletal muscle. Expression is significantly lower in testicular cancer tissues than in normal testicular tissues. Isoform 3 is expressed in the testis, trachea, prostate and bone marrow.

The protein localises to the membrane. The enzyme catalyses a phosphate monoester + H2O = an alcohol + phosphate. In terms of biological role, may dephosphorylate receptor tyrosine-protein kinase ERBB4 and inhibits its ligand-induced proteolytic cleavage. May play a role in odontogenesis. This chain is Testicular acid phosphatase, found in Homo sapiens (Human).